Here is a 384-residue protein sequence, read N- to C-terminus: FAD-dependent urate hydroxylase (384 aa).

Residues glycine 11, 30 to 31 (EA), serine 43, and valine 125 each bind FAD. Substrate is bound by residues asparagine 178, arginine 204, and 216 to 218 (YFF). FAD is bound by residues aspartate 285 and 295–299 (GQGGC).

This sequence belongs to the FAD-dependent urate hydroxylase family. FAD serves as cofactor.

The enzyme catalyses urate + NADH + O2 + H(+) = 5-hydroxyisourate + NAD(+) + H2O. It participates in purine metabolism; urate degradation. In terms of biological role, catalyzes the hydroxylation of uric acid to 5-hydroxyisourate. This chain is FAD-dependent urate hydroxylase (hpxO), found in Klebsiella pneumoniae.